We begin with the raw amino-acid sequence, 276 residues long: MSSNSDHHISVEHTDGVATIRFTRPSKHNAASGQLLLETLEALYRLESDDSVGAIVLTGEGAVFSAGFDLEEVPMGPASEIQSHFRLKALYYHAVIHMLARIEKPTLAAINGPAVGGGLGMSLACDLAVCTDRATFLPAWMSIGIANDASSSFYLPRIVGYRRAMEWLLTNRTLGADEAYEWGVVNRVFSEADFQSRVGEIARQLAAAPTHLQGLVKNRIQEGSSETLESCTEHEVQNVIASVGHPHFAERLAMFRSKEMRSSALAVDLDAVCGGR.

Substrate is bound at residue 66–71 (AGFDLE). His-93 functions as the Proton acceptor in the catalytic mechanism. Gly-117 serves as a coordination point for substrate. Asp-148 serves as the catalytic Nucleophile. Arg-261 is a binding site for substrate.

Belongs to the enoyl-CoA hydratase/isomerase family. Homotetramer.

It catalyses the reaction 4-chlorobenzoyl-CoA + H2O = 4-hydroxybenzoyl-CoA + chloride + H(+). It functions in the pathway xenobiotic degradation; 4-chlorobenzoate degradation; 4-hydroxybenzoate from 4-chlorobenzoate: step 2/3. Dehalogenates 4-chlorobenzoyl-CoA, 4-iodobenzoyl-CoA, 4-bromobenzoyl-CoA and, at a slower rate, 4-fluorobenzoyl-CoA. Does not dehalogenate 2-chlorobenzoyl-CoA or 3-chlorobenzoyl-CoA. The polypeptide is 4-chlorobenzoyl coenzyme A dehalogenase-1 (Arthrobacter sp).